Here is a 1257-residue protein sequence, read N- to C-terminus: Phosphatidylinositol 3,4,5-trisphosphate 5-phosphatase 2 (1257 aa).

The 97-residue stretch at Trp-21 to Val-117 folds into the SH2 domain. Residues Gly-119–Ser-132 are compositionally biased toward basic and acidic residues. A disordered region spans residues Gly-119–Val-181. Ser-132 carries the phosphoserine modification. A compositionally biased stretch (pro residues) spans Pro-156–Pro-166. Thr-165 is modified (phosphothreonine). A phosphoserine mark is found at Ser-241 and Ser-353. At Tyr-887 the chain carries Phosphotyrosine. Position 891 is a phosphoserine (Ser-891). Residues Thr-897–Ala-986 form a disordered region. The segment covering Pro-939–Ala-951 has biased composition (pro residues). The SH3-binding signature appears at Pro-945–Arg-950. The segment covering Val-952 to Gly-966 has biased composition (basic and acidic residues). The NPXY motif signature appears at Asn-984–Tyr-987. A Phosphotyrosine modification is found at Tyr-987. The interval Ser-1004–Ala-1115 is disordered. Composition is skewed to pro residues over residues Leu-1049–Pro-1060 and Gly-1088–Thr-1104. Residue Ser-1132 is modified to Phosphoserine. Tyr-1136 and Tyr-1161 each carry phosphotyrosine. The SAM domain occupies Leu-1195–Lys-1257. A Phosphoserine modification is found at Ser-1256.

It belongs to the inositol 1,4,5-trisphosphate 5-phosphatase family. As to quaternary structure, interacts with tyrosine phosphorylated form of SHC1. Interacts with EGFR. Upon stimulation by the EGF signaling pathway, it forms a complex with SHC1 and EGFR. Interacts with cytoskeletal protein SORBS3/vinexin, promoting its localization to the periphery of cells. Forms a complex with filamin (FLNA or FLNB), actin, GPIb (GP1BA or GP1BB) that regulates cortical and submembraneous actin. Interacts with c-Met/MET, when c-Met/MET is phosphorylated on 'Tyr-1356'. Interacts with p130Cas/BCAR1. Interacts with CENTD3/ARAP3 via its SAM domain. Interacts with c-Cbl/CBL and CAP/SORBS1. Interacts with activated EPHA2 receptor. Interacts with receptors FCGR2A. Interacts with FCGR2B. Interacts with tyrosine kinase ABL1. Interacts with tyrosine kinase TEC. Interacts with CSF1R. Interacts (via N-terminus) with SH3YL1 (via SH3 domain). Interacts (via SH2 domain) with tyrosine phosphorylated KLRC1 (via ITIM). Interacts with NEDD9/HEF1. Post-translationally, tyrosine phosphorylated by the members of the SRC family after exposure to a diverse array of extracellular stimuli such as insulin, growth factors such as EGF or PDGF, chemokines, integrin ligands and hypertonic and oxidative stress. May be phosphorylated upon IgG receptor FCGR2B-binding. Phosphorylated at Tyr-987 following cell attachment and spreading. Phosphorylated at Tyr-1161 following EGF signaling pathway stimulation.

The protein resides in the cytoplasm. The protein localises to the cytosol. It is found in the cytoskeleton. Its subcellular location is the membrane. It localises to the cell projection. The protein resides in the filopodium. The protein localises to the lamellipodium. It is found in the basal cell membrane. Its subcellular location is the nucleus. It localises to the nucleus speckle. The protein resides in the spindle pole. The enzyme catalyses a 1,2-diacyl-sn-glycero-3-phospho-(1D-myo-inositol-3,4,5-trisphosphate) + H2O = a 1,2-diacyl-sn-glycero-3-phospho-(1D-myo-inositol-3,4-bisphosphate) + phosphate. It catalyses the reaction 1,2-dioctanoyl-sn-glycero-3-phospho-(1D-myo-inositol-3,4,5-trisphosphate) + H2O = 1,2-dioctanoyl-sn-glycero-3-phospho-(1D-myo-inositol-3,4-bisphosphate) + phosphate. The catalysed reaction is 1,2-dihexadecanoyl-sn-glycero-3-phospho-(1D-myo-inositol-3,4,5-trisphosphate) + H2O = 1,2-dihexadecanoyl-sn-glycero-3-phospho-(1D-myo-inositol-3,4-bisphosphate) + phosphate. With respect to regulation, activated upon translocation to the sites of synthesis of PtdIns(3,4,5)P3 in the membrane. Enzymatic activity is enhanced in the presence of phosphatidylserine. Phosphatidylinositol (PtdIns) phosphatase that specifically hydrolyzes the 5-phosphate of phosphatidylinositol-3,4,5-trisphosphate (PtdIns(3,4,5)P3) to produce PtdIns(3,4)P2, thereby negatively regulating the PI3K (phosphoinositide 3-kinase) pathways. Required for correct mitotic spindle orientation and therefore progression of mitosis. Plays a central role in regulation of PI3K-dependent insulin signaling, although the precise molecular mechanisms and signaling pathways remain unclear. While overexpression reduces both insulin-stimulated MAP kinase and Akt activation, its absence does not affect insulin signaling or GLUT4 trafficking. Confers resistance to dietary obesity. May act by regulating AKT2, but not AKT1, phosphorylation at the plasma membrane. Part of a signaling pathway that regulates actin cytoskeleton remodeling. Required for the maintenance and dynamic remodeling of actin structures as well as in endocytosis, having a major impact on ligand-induced EGFR internalization and degradation. Participates in regulation of cortical and submembraneous actin by hydrolyzing PtdIns(3,4,5)P3 thereby regulating membrane ruffling. Regulates cell adhesion and cell spreading. Required for HGF-mediated lamellipodium formation, cell scattering and spreading. Acts as a negative regulator of EPHA2 receptor endocytosis by inhibiting via PI3K-dependent Rac1 activation. Acts as a regulator of neuritogenesis by regulating PtdIns(3,4,5)P3 level and is required to form an initial protrusive pattern, and later, maintain proper neurite outgrowth. Acts as a negative regulator of the FC-gamma-RIIA receptor (FCGR2A). Mediates signaling from the FC-gamma-RIIB receptor (FCGR2B), playing a central role in terminating signal transduction from activating immune/hematopoietic cell receptor systems. Involved in EGF signaling pathway. Upon stimulation by EGF, it is recruited by EGFR and dephosphorylates PtdIns(3,4,5)P3. Plays a negative role in regulating the PI3K-PKB pathway, possibly by inhibiting PKB activity. Down-regulates Fc-gamma-R-mediated phagocytosis in macrophages independently of INPP5D/SHIP1. In macrophages, down-regulates NF-kappa-B-dependent gene transcription by regulating macrophage colony-stimulating factor (M-CSF)-induced signaling. Plays a role in the localization of AURKA and NEDD9/HEF1 to the basolateral membrane at interphase in polarized cysts, thereby mediates cell cycle homeostasis, cell polarization and cilia assembly. Additionally promotion of cilia growth is also facilitated by hydrolysis of (PtdIns(3,4,5)P3) to PtdIns(3,4)P2. Promotes formation of apical membrane-initiation sites during the initial stages of lumen formation via Rho family-induced actin filament organization and CTNNB1 localization to cell-cell contacts. May also hydrolyze PtdIns(1,3,4,5)P4, and could thus affect the levels of the higher inositol polyphosphates like InsP6. Involved in endochondral ossification. This is Phosphatidylinositol 3,4,5-trisphosphate 5-phosphatase 2 from Rattus norvegicus (Rat).